The primary structure comprises 474 residues: L-arabinose isomerase (474 aa).

Positions 306, 331, 348, and 447 each coordinate Mn(2+).

This sequence belongs to the arabinose isomerase family. Requires Mn(2+) as cofactor.

It carries out the reaction beta-L-arabinopyranose = L-ribulose. It functions in the pathway carbohydrate degradation; L-arabinose degradation via L-ribulose; D-xylulose 5-phosphate from L-arabinose (bacterial route): step 1/3. Its function is as follows. Catalyzes the conversion of L-arabinose to L-ribulose. The polypeptide is L-arabinose isomerase (Oceanobacillus iheyensis (strain DSM 14371 / CIP 107618 / JCM 11309 / KCTC 3954 / HTE831)).